Consider the following 746-residue polypeptide: Polyribonucleotide nucleotidyltransferase (746 aa).

Residues Asp515 and Asp521 each coordinate Mg(2+). Positions 581-640 (PRVIAVKIPVDKIGEVIGPKGKMINQIQEDTGADISIEDDGTVYIGATNGPSADAARSAI) constitute a KH domain. An S1 motif domain is found at 652–724 (GERYLGTVVK…DRGKLSLSPV (73 aa)).

Belongs to the polyribonucleotide nucleotidyltransferase family. It depends on Mg(2+) as a cofactor.

It is found in the cytoplasm. The enzyme catalyses RNA(n+1) + phosphate = RNA(n) + a ribonucleoside 5'-diphosphate. Functionally, involved in mRNA degradation. Catalyzes the phosphorolysis of single-stranded polyribonucleotides processively in the 3'- to 5'-direction. The polypeptide is Polyribonucleotide nucleotidyltransferase (Renibacterium salmoninarum (strain ATCC 33209 / DSM 20767 / JCM 11484 / NBRC 15589 / NCIMB 2235)).